Here is a 178-residue protein sequence, read N- to C-terminus: Stathmin-2-B (178 aa).

The 141-residue stretch at 38 to 178 (DDMEVKQLNK…KNKEQLELSG (141 aa)) folds into the SLD domain. The stretch at 75–178 (KRKDVSLEEI…KNKEQLELSG (104 aa)) forms a coiled coil.

It belongs to the stathmin family. As to expression, nervous tissue.

The protein localises to the cytoplasm. Its subcellular location is the membrane. It localises to the cell projection. It is found in the lamellipodium. The polypeptide is Stathmin-2-B (stmn2-b) (Xenopus laevis (African clawed frog)).